We begin with the raw amino-acid sequence, 299 residues long: Transcription termination/antitermination protein NusG (299 aa).

The tract at residues 30–96 is disordered; it reads DPDEAELADA…APVEPAEPVD (67 aa). 2 tandem repeats follow at residues 46–49 and 70–73. The segment at 46–87 is 4 X 4 AA repeats of E-E-A-A; it reads EEAALHVESDEDEDEADVEVDAAVEEAADDAEVAEEEAEEAA. The span at 54–87 shows a compositional bias: acidic residues; it reads SDEDEDEADVEVDAAVEEAADDAEVAEEEAEEAA. One copy of the 3; approximate repeat lies at 80 to 83; it reads EEEA. Repeat 4 spans residues 84-87; it reads EEAA. Residues 248–276 form the KOW domain; it reads VGDSVTVTDGPFATLQATINEINPDSKKV.

Belongs to the NusG family. In terms of processing, the N-terminus is blocked.

Its function is as follows. Participates in transcription elongation, termination and antitermination. In Streptomyces virginiae (Streptomyces cinnamonensis), this protein is Transcription termination/antitermination protein NusG.